We begin with the raw amino-acid sequence, 131 residues long: C-type natriuretic peptide 2 (131 aa).

An N-terminal signal peptide occupies residues 1–22 (MLYPALLCAALLLIAPLGHTEG). A propeptide spanning residues 23 to 109 (RTLYPSPDAI…KRAVTDRSRR (87 aa)) is cleaved from the precursor. A disulfide bond links C115 and C131.

This sequence belongs to the natriuretic peptide family. In terms of tissue distribution, expressed in brain and to a low extent in atrium.

It localises to the secreted. Its function is as follows. Exhibits natriuretic and vasodepressor activity. Has a cGMP-stimulating activity. The polypeptide is C-type natriuretic peptide 2 (Oncorhynchus mykiss (Rainbow trout)).